Reading from the N-terminus, the 1385-residue chain is Coiled-coil domain-containing protein 7 (1385 aa).

The stretch at 299–330 forms a coiled coil; sequence LDAEYKQMQCDFQLLSEEKLVLENELQKLKDK. The interval 329 to 364 is disordered; it reads DKEKTKPTNNRTKKAVKTVKKKDKGKSEDSEKKMSP. Residues 339–352 are compositionally biased toward basic residues; it reads RTKKAVKTVKKKDK. Residues 353–364 are compositionally biased toward basic and acidic residues; sequence GKSEDSEKKMSP. A coiled-coil region spans residues 374–411; that stretch reads LDQVQKVARLEIENKVLQEQLKQALQEAEKAKHQLNYF. Disordered regions lie at residues 422-545, 572-752, and 809-834; these read GKTE…SKEV, TESK…EPNE, and TKKL…LKHQ. Positions 425–436 are enriched in polar residues; it reads ETTMQVGNSQTK. Basic and acidic residues-rich tracts occupy residues 437 to 455 and 481 to 490; these read VKGE…RKSL and LIEKSSEKKR. Composition is skewed to polar residues over residues 493–503, 511–528, and 536–545; these read PAISDLSQILK, LESS…YKSP, and LTTVSSSKEV. The span at 573-589 shows a compositional bias: basic and acidic residues; the sequence is ESKKADVSEEQLQKMTE. The segment covering 654–664 has biased composition (polar residues); it reads RIQSETKNLKA. Basic and acidic residues-rich tracts occupy residues 665–676 and 685–697; these read TRNESFHSHNDV and QDTK…EVKK. The span at 701 to 711 shows a compositional bias: polar residues; the sequence is FQDNQLSTHNE. Positions 712–726 are enriched in basic and acidic residues; that stretch reads VPNERLVVEHQESLS.

Expressed in epithelium of normal cervix and cervical cancer. Overexpressed in early and interim cervical cancer.

In terms of biological role, may play a role in tumorigenesis. The polypeptide is Coiled-coil domain-containing protein 7 (CCDC7) (Homo sapiens (Human)).